A 348-amino-acid chain; its full sequence is 3-methyl-2-oxobutanoate dehydrogenase subunit beta (348 aa).

Residues Glu51, 80 to 82 (LAE), Gln104, and 108 to 111 (FSYP) contribute to the thiamine diphosphate site. Substrate contacts are provided by residues 105–108 (FDGF) and His151. The active-site Proton acceptor is the His151.

In terms of assembly, heteromer of E1 alpha (BkdA) and beta (BkdB) subunits. Part of the BCKADH complex, consisting of multiple copies of BkdA/BkdB (E1), BkdC (E2) and Lpd (E3). Requires thiamine diphosphate as cofactor.

The catalysed reaction is N(6)-[(R)-lipoyl]-L-lysyl-[protein] + 3-methyl-2-oxobutanoate + H(+) = N(6)-[(R)-S(8)-2-methylpropanoyldihydrolipoyl]-L-lysyl-[protein] + CO2. Its function is as follows. Component of the branched-chain alpha-ketoacid dehydrogenase (BCKADH) complex, that catalyzes the overall conversion of branched-chain alpha-ketoacids to acyl-CoA and CO(2). The sequence is that of 3-methyl-2-oxobutanoate dehydrogenase subunit beta (bkdB) from Mycobacterium tuberculosis (strain CDC 1551 / Oshkosh).